The sequence spans 470 residues: Ribosomal protein uS12 methylthiotransferase RimO (470 aa).

The 117-residue stretch at 4–120 (TRVYLHTLGC…IARVVSDAQA (117 aa)) folds into the MTTase N-terminal domain. Residues Cys-13, Cys-49, Cys-83, Cys-155, Cys-159, and Cys-162 each contribute to the [4Fe-4S] cluster site. Positions 141 to 371 (SLPSHTAYLK…MALQQEISRE (231 aa)) constitute a Radical SAM core domain. The TRAM domain maps to 374-442 (RAMVGRRLEV…EYDLVGHVVA (69 aa)). The segment at 447 to 470 (RARRPLPAPAGGETPRRGGLPVVG) is disordered.

Belongs to the methylthiotransferase family. RimO subfamily. [4Fe-4S] cluster serves as cofactor.

The protein resides in the cytoplasm. The enzyme catalyses L-aspartate(89)-[ribosomal protein uS12]-hydrogen + (sulfur carrier)-SH + AH2 + 2 S-adenosyl-L-methionine = 3-methylsulfanyl-L-aspartate(89)-[ribosomal protein uS12]-hydrogen + (sulfur carrier)-H + 5'-deoxyadenosine + L-methionine + A + S-adenosyl-L-homocysteine + 2 H(+). Functionally, catalyzes the methylthiolation of an aspartic acid residue of ribosomal protein uS12. This chain is Ribosomal protein uS12 methylthiotransferase RimO, found in Anaeromyxobacter sp. (strain Fw109-5).